A 336-amino-acid polypeptide reads, in one-letter code: MAAPILDPNAPAFTRRYMNLADPRLGAKALFASDEFFAPKERMLDPEPAVFIPGKYDDHGKWMDGWETRRKRTTGHDFCVVRLARPGVVYGVDLDTSHFTGNFPPAASIDACVSDADTPPDDAVWETLVPATTLAGNQHHYVDVSNPRAYTHLRVNLYPDGGLARLRVYGQPQRDWSRAARGELVDLAAIENGAYLVAANNEHFGPASRMLMPGRGANMGDGWETRRRREPGNDWAIVALARPGVIRRVEVDTAHFKGNFPDRCSLQAARVAGGTDASLVTQAMFWPMLLGEQPLGMDSVHTFETQLAALGPVTHVRLNIHPDGGVSRLRFWGELA.

This sequence belongs to the allantoicase family.

It carries out the reaction allantoate + H2O = (S)-ureidoglycolate + urea. The protein operates within nitrogen metabolism; (S)-allantoin degradation; (S)-ureidoglycolate from allantoate (aminidohydrolase route): step 1/1. In Burkholderia mallei (strain ATCC 23344), this protein is Probable allantoicase 2.